Reading from the N-terminus, the 178-residue chain is Endothelin-2 (178 aa).

A signal peptide spans 1–24 (MVAVPTAWCSVALALLLALQEGKG). Positions 25-46 (QVAAAPDHPAPSPRARGSHLRP) are excised as a propeptide. Disulfide bonds link cysteine 49-cysteine 63 and cysteine 51-cysteine 59. The propeptide occupies 70–178 (VNTPGQTAPY…RPMYPRRRKT (109 aa)). The tract at residues 96-111 (CECSSSGDPACATFCH) is endothelin-like. Residues 158-178 (ARQHQEAEREPRPMYPRRRKT) are disordered. Basic and acidic residues predominate over residues 160-169 (QHQEAEREPR).

Belongs to the endothelin/sarafotoxin family.

It is found in the secreted. Its function is as follows. Endothelins are endothelium-derived vasoconstrictor peptides. The polypeptide is Endothelin-2 (EDN2) (Mustela putorius furo (European domestic ferret)).